We begin with the raw amino-acid sequence, 53 residues long: 20 kDa chaperonin (53 aa).

Cpn-10 domain regions lie at residues 1–10 (YTSIKPLGDR) and 11–53 (VAEA…KITP).

This sequence belongs to the GroES chaperonin family. As to quaternary structure, forms stable complexes with cpn60 in the presence of ATP. Homotetramer.

The protein localises to the plastid. Its subcellular location is the chloroplast. Its function is as follows. Seems to function only as a co-chaperone, along with cpn60, and in certain cases is essential for the discharge of biologically active proteins from cpn60. This chain is 20 kDa chaperonin, found in Populus euphratica (Euphrates poplar).